The following is a 356-amino-acid chain: D-alanine--D-alanine ligase (356 aa).

One can recognise an ATP-grasp domain in the interval 134–339; sequence KQLFAHRGLP…YSDLIKKLIE (206 aa). Position 167–222 (167–222) interacts with ATP; the sequence is HDKLEYPVFVKPANLGSSVGISKCNNEEELKNGIEEAFQFDRKLVIEQGIEAREIE. Mg(2+) is bound by residues D293, E306, and N308.

This sequence belongs to the D-alanine--D-alanine ligase family. Mg(2+) serves as cofactor. The cofactor is Mn(2+).

It localises to the cytoplasm. It catalyses the reaction 2 D-alanine + ATP = D-alanyl-D-alanine + ADP + phosphate + H(+). It participates in cell wall biogenesis; peptidoglycan biosynthesis. Functionally, cell wall formation. The sequence is that of D-alanine--D-alanine ligase from Staphylococcus saprophyticus subsp. saprophyticus (strain ATCC 15305 / DSM 20229 / NCIMB 8711 / NCTC 7292 / S-41).